Here is a 75-residue protein sequence, read N- to C-terminus: MYB-like transcription factor ETC3 (75 aa).

The tract at residues 1 to 20 (MDNHRRTKQPKTNSIVTSSS) is disordered. Residues 34 to 71 (SQEEEDLVSRMHKLVGDRWELIAGRIPGRTAGEIERFW) enclose the Myb-like domain.

As to expression, expressed in leaf epidermal cells, stomate guard cells in leaves, cotyledons and hypocotyls, inflorescences, developing seeds and siliques.

The protein resides in the nucleus. In terms of biological role, MYB-type transcription factor involved in epidermal cell fate specification. Acts as a negative regulator of trichome development, including endoreplication, by mediating lateral inhibition. Promotes the formation of hair developing cells in H position in root epidermis, probably by inhibiting non-hair cell formation. May have pleiotropic effects on flowering development and epidermal cell size through the regulation of endoreduplication. The chain is MYB-like transcription factor ETC3 (ETC3) from Arabidopsis thaliana (Mouse-ear cress).